The sequence spans 226 residues: Large ribosomal subunit protein uL3 (226 aa).

Belongs to the universal ribosomal protein uL3 family. As to quaternary structure, part of the 50S ribosomal subunit. Forms a cluster with proteins L14 and L19.

Its function is as follows. One of the primary rRNA binding proteins, it binds directly near the 3'-end of the 23S rRNA, where it nucleates assembly of the 50S subunit. The polypeptide is Large ribosomal subunit protein uL3 (Sulfurihydrogenibium sp. (strain YO3AOP1)).